The chain runs to 33 residues: Non-specific lipid-transfer protein (33 aa).

Cysteine 14 and cysteine 29 are disulfide-bonded.

Belongs to the plant LTP family. In terms of assembly, dimer.

Its function is as follows. Plant non-specific lipid-transfer proteins transfer phospholipids as well as galactolipids across membranes. May play a role in wax or cutin deposition in the cell walls of expanding epidermal cells and certain secretory tissues. Has antibacterial activity against Gram-positive bacteria S.aureus and S.epidermidis and blocks biofilm formation. In a mouse model, also protects against bacterial sepsis and has an anti-inflammatory effect. Exhibits antinociceptive activity upon oral or intraperitoneal application in mice. In Morinda citrifolia (Indian mulberry), this protein is Non-specific lipid-transfer protein.